Here is a 193-residue protein sequence, read N- to C-terminus: Peptidyl-tRNA hydrolase (193 aa).

TRNA is bound at residue Tyr17. Catalysis depends on His22, which acts as the Proton acceptor. The tRNA site is built by Phe68, Asn70, and Asn115.

The protein belongs to the PTH family. Monomer.

The protein localises to the cytoplasm. The enzyme catalyses an N-acyl-L-alpha-aminoacyl-tRNA + H2O = an N-acyl-L-amino acid + a tRNA + H(+). Its function is as follows. Hydrolyzes ribosome-free peptidyl-tRNAs (with 1 or more amino acids incorporated), which drop off the ribosome during protein synthesis, or as a result of ribosome stalling. In terms of biological role, catalyzes the release of premature peptidyl moieties from peptidyl-tRNA molecules trapped in stalled 50S ribosomal subunits, and thus maintains levels of free tRNAs and 50S ribosomes. This chain is Peptidyl-tRNA hydrolase, found in Alteromonas mediterranea (strain DSM 17117 / CIP 110805 / LMG 28347 / Deep ecotype).